Reading from the N-terminus, the 858-residue chain is Elongation factor 2b (858 aa).

One can recognise a tr-type G domain in the interval 17–362 (SNIRNMSVIA…MITIHLPSPV (346 aa)). GTP-binding positions include 26 to 33 (AHVDHGKS), 158 to 161 (NKMD), and 216 to 218 (SGL). H715 carries the post-translational modification Diphthamide.

The protein belongs to the TRAFAC class translation factor GTPase superfamily. Classic translation factor GTPase family. EF-G/EF-2 subfamily. As to quaternary structure, binds to 80S ribosomes. Actively translating ribosomes show mutually exclusive binding of eIF5a (EIF5A or EIF5A2) and EEF2/eEF2. Interacts with serbp1; interaction sequesters eef2/eEF2 at the A-site of the ribosome, thereby blocking the interaction sites of the mRNA-tRNA complex, promoting ribosome stabilization and hibernation. Interacts with habp4; interaction takes place at the A-site of hibernating ribosomes and promotes ribosome stabilization.

It localises to the cytoplasm. Its subcellular location is the nucleus. The enzyme catalyses GTP + H2O = GDP + phosphate + H(+). In terms of biological role, catalyzes the GTP-dependent ribosomal translocation step during translation elongation. During this step, the ribosome changes from the pre-translocational (PRE) to the post-translocational (POST) state as the newly formed A-site-bound peptidyl-tRNA and P-site-bound deacylated tRNA move to the P and E sites, respectively. Catalyzes the coordinated movement of the two tRNA molecules, the mRNA and conformational changes in the ribosome. The sequence is that of Elongation factor 2b from Danio rerio (Zebrafish).